The following is a 395-amino-acid chain: MRLIMMKVSAYDLNKIAEKLNLSIKDLNKAFSRKILREDEYKEIKTLLFKKEFKGIEKGTVIFLNDNLDVVRGYPKTYRAITLYPTIKKHFIDKVVIEEKLNGYNIRIVKIDGEVYALTRSGYICPFTTKKVKKFLNLEILDDYSEYMLCGEMIGINNPYTPYYYKEVDRGFENLGFYIFDIKERETNKSLPIKERINLCEKYNLPYVKPLAVVDKDEAHIHVREIIEKLNKEGREGVVLKDPDMAVSPIKYTTHYTQCEDLKSAFTFFFDLGMDFLFSRVVREGFMSYEFKETLEERKNRAKDLGEAILLPMVETINKVASGERVSEDFELIFDSEEDFDEFLDFMRKMKMVITIKNIEKIDTEEGVKIKAVIGKIYNKTNDKIISYLNGTLWE.

This is an uncharacterized protein from Methanocaldococcus jannaschii (strain ATCC 43067 / DSM 2661 / JAL-1 / JCM 10045 / NBRC 100440) (Methanococcus jannaschii).